A 370-amino-acid chain; its full sequence is Putative glutamate--cysteine ligase 2 (370 aa).

Belongs to the glutamate--cysteine ligase type 2 family. YbdK subfamily.

The enzyme catalyses L-cysteine + L-glutamate + ATP = gamma-L-glutamyl-L-cysteine + ADP + phosphate + H(+). In terms of biological role, ATP-dependent carboxylate-amine ligase which exhibits weak glutamate--cysteine ligase activity. The protein is Putative glutamate--cysteine ligase 2 of Methylibium petroleiphilum (strain ATCC BAA-1232 / LMG 22953 / PM1).